Reading from the N-terminus, the 407-residue chain is Aspartokinase (407 aa).

Residue 7-10 (KFGG) participates in ATP binding. A substrate-binding site is contributed by 25–30 (RVIEEV). Ser-41 is an ATP binding site. Substrate is bound by residues 47–49 (TDE), Glu-74, 125–126 (LD), 150–153 (RGGS), and Ser-153. ATP is bound by residues 173–174 (TD) and 179–184 (FTTDPR). ACT domains follow at residues 264–338 (VTVV…LAKV) and 340–407 (IVGS…AVRS). Residues 289–291 (NVD), Gln-295, 351–352 (VA), 365–366 (EI), and 372–373 (SE) contribute to the substrate site.

Belongs to the aspartokinase family. As to quaternary structure, tetramer consisting of 2 isoforms Alpha (catalytic and regulation) and of a homodimer of 2 isoforms Beta (regulation).

It carries out the reaction L-aspartate + ATP = 4-phospho-L-aspartate + ADP. It functions in the pathway amino-acid biosynthesis; L-lysine biosynthesis via DAP pathway; (S)-tetrahydrodipicolinate from L-aspartate: step 1/4. It participates in amino-acid biosynthesis; L-methionine biosynthesis via de novo pathway; L-homoserine from L-aspartate: step 1/3. The protein operates within amino-acid biosynthesis; L-threonine biosynthesis; L-threonine from L-aspartate: step 1/5. Its activity is regulated as follows. Lysine-sensitive. Functionally, catalyzes the phosphorylation of the beta-carboxyl group of aspartic acid with ATP to yield 4-phospho-L-aspartate, which is involved in the branched biosynthetic pathway leading to the biosynthesis of amino acids threonine, isoleucine and methionine. This is Aspartokinase (lysC) from Geobacillus stearothermophilus (Bacillus stearothermophilus).